A 521-amino-acid chain; its full sequence is Na(+)/H(+) antiporter ApNhaP (521 aa).

At 1 to 18 (MTIEAAMGEEAIKENLEQ) the chain is on the periplasmic side. The helical transmembrane segment at 19–39 (FLIVLSVSLGVATLSQISSFF) threads the bilayer. Over 40–41 (RQ) the chain is Cytoplasmic. A helical transmembrane segment spans residues 42 to 62 (IPYTLLLVIVGLGLAFVDIRL). Residues 63-94 (VNLSPELILEIFLPPLLFEAAWNIRWRNLKKN) lie on the Periplasmic side of the membrane. Residues 95–115 (LFPVVLLAIIGVVISVVGIGF) form a helical membrane-spanning segment. Residues 116–126 (SLNYFSGLSLP) are Cytoplasmic-facing. The chain crosses the membrane as a helical span at residues 127 to 147 (IALLVGAILAATDPVSVIALF). At 148–164 (RELGVGERLTVLMEGES) the chain is on the periplasmic side. The helical transmembrane segment at 165 to 185 (LFNDGVAVVAFSLLVGIPLGT) threads the bilayer. Residues 186-194 (QEFSVTNTL) are Cytoplasmic-facing. A helical membrane pass occupies residues 195–215 (IQFVTLQGIGIGCGGVIGFGI). Topologically, residues 216–245 (SYLTQRFDLPLVEQSLTLVSAYGTYLITEE) are periplasmic. The helical transmembrane segment at 246–266 (LGGSGVIGVVTVGLILGNFGS) threads the bilayer. The Cytoplasmic segment spans residues 267-276 (RIGMNPRTRL). Residues 277 to 297 (LVSEFWEFIAFFVNSIVFLLI) traverse the membrane as a helical segment. The Periplasmic segment spans residues 298–311 (GDQINIRGLADNGQ). A helical membrane pass occupies residues 312–332 (LILITIIALVIIRAISIYGLG). At 333-349 (TISNLITKQDISWQEET) the chain is on the cytoplasmic side. The helical transmembrane segment at 350-370 (VLWWGGLRGSVSIALALSVPV) threads the bilayer. The Periplasmic segment spans residues 371 to 380 (MLDGRQDIIE). Residues 381 to 401 (AVFGVVLFTLLVQGLTMQTVI) traverse the membrane as a helical segment. The Cytoplasmic portion of the chain corresponds to 402-521 (EKLGLIGDRA…LLQEVLAKPE (120 aa)).

Belongs to the monovalent cation:proton antiporter 1 (CPA1) transporter (TC 2.A.36) family.

Its subcellular location is the cell inner membrane. In terms of biological role, na(+)/H(+) antiporter that extrudes sodium in exchange for external protons. Also shows high Ca(2+)/H(+) antiporter activity at alkaline pH. Does not catalyze exchange between Li(+) and H(+). The sequence is that of Na(+)/H(+) antiporter ApNhaP (apnhaP) from Aphanothece halophytica.